We begin with the raw amino-acid sequence, 276 residues long: CTD small phosphatase-like protein (276 aa).

The tract at residues 1–31 (MDGPAIITQVTNPKEDEARSPVAGEKASQRN) is disordered. One can recognise an FCP1 homology domain in the interval 102–260 (LDYGKKCVVI…LDLIPFFEGL (159 aa)). The active-site 4-aspartylphosphate intermediate is Asp112. Positions 112, 114, and 223 each coordinate Mg(2+). Asp114 (proton donor) is an active-site residue.

As to quaternary structure, monomer. Interacts with REST. Mg(2+) serves as cofactor.

It is found in the nucleus. The catalysed reaction is O-phospho-L-seryl-[protein] + H2O = L-seryl-[protein] + phosphate. It carries out the reaction O-phospho-L-threonyl-[protein] + H2O = L-threonyl-[protein] + phosphate. Preferentially catalyzes the dephosphorylation of 'Ser-5' within the tandem 7 residue repeats in the C-terminal domain (CTD) of the largest RNA polymerase II subunit POLR2A. Negatively regulates RNA polymerase II transcription, possibly by controlling the transition from initiation/capping to processive transcript elongation. Recruited by REST to neuronal genes that contain RE-1 elements, leading to neuronal gene silencing in non-neuronal cells. The chain is CTD small phosphatase-like protein (Ctdspl) from Mus musculus (Mouse).